Here is a 231-residue protein sequence, read N- to C-terminus: 7-cyano-7-deazaguanine synthase (231 aa).

8 to 18 is an ATP binding site; the sequence is FSGGQDSTTCL. 4 residues coordinate Zn(2+): Cys-188, Cys-197, Cys-200, and Cys-203.

This sequence belongs to the QueC family. Zn(2+) is required as a cofactor.

It carries out the reaction 7-carboxy-7-deazaguanine + NH4(+) + ATP = 7-cyano-7-deazaguanine + ADP + phosphate + H2O + H(+). It functions in the pathway purine metabolism; 7-cyano-7-deazaguanine biosynthesis. Catalyzes the ATP-dependent conversion of 7-carboxy-7-deazaguanine (CDG) to 7-cyano-7-deazaguanine (preQ(0)). The sequence is that of 7-cyano-7-deazaguanine synthase from Salmonella agona (strain SL483).